Reading from the N-terminus, the 930-residue chain is Beta-mannosidase A (930 aa).

The first 21 residues, 1 to 21 (MHVKAETVLALLTPGLPSVVG), serve as a signal peptide directing secretion. Residues Asn-62, Asn-246, Asn-281, Asn-315, and Asn-346 are each glycosylated (N-linked (GlcNAc...) asparagine). The Proton donor role is filled by Glu-478. N-linked (GlcNAc...) asparagine glycans are attached at residues Asn-536, Asn-607, Asn-630, Asn-657, Asn-737, Asn-760, Asn-782, Asn-789, Asn-797, Asn-823, and Asn-909.

The protein belongs to the glycosyl hydrolase 2 family. Beta-mannosidase A subfamily. Homodimer.

It localises to the secreted. It carries out the reaction Hydrolysis of terminal, non-reducing beta-D-mannose residues in beta-D-mannosides.. It participates in glycan metabolism; N-glycan degradation. Functionally, exoglycosidase that cleaves the single beta-linked mannose residue from the non-reducing end of beta-mannosidic oligosaccharides of various complexity and length. Involved in the degradation of polymeric mannan and galactomannan. The chain is Beta-mannosidase A (mndA) from Neosartorya fischeri (strain ATCC 1020 / DSM 3700 / CBS 544.65 / FGSC A1164 / JCM 1740 / NRRL 181 / WB 181) (Aspergillus fischerianus).